The following is a 1373-amino-acid chain: Disease resistance protein RRS1 (1373 aa).

A TIR domain is found at 5-146 (EKDEEFVCIS…EIVRDVYETH (142 aa)). Residues 170–421 (IGIRCVGIWG…LLEGCGFFPH (252 aa)) form the NB-ARC domain. 179 to 186 (GMPGIGKT) contributes to the ATP binding site. LRR repeat units follow at residues 498 to 522 (SEEI…AFKN), 535 to 553 (NPEV…HSLP), 554 to 575 (NELR…NFDP), 577 to 598 (HLVE…TKNL), 621 to 646 (AENL…RLLR), 665 to 688 (PPNI…TVKP), 742 to 766 (LPNM…SIQG), 768 to 793 (PRFL…SLEI), and 831 to 854 (PRNL…PLSL). The Nuclear localization signal motif lies at 988 to 1005 (RNFHCWAPGKVVPKVRKD). The WRKY DNA-binding region spans 1204 to 1272 (IPAIDEGDLW…YLSEHNHPRP (69 aa)). Residues 1300 to 1323 (RVFQNKDEPNKPHLPSSSTPPGNA) are disordered.

In terms of assembly, interacts with PopP2, a R.solanacearum type III effector.

The protein localises to the nucleus. In terms of biological role, transcription factor. Interacts specifically with the W box (5'-(T)TGAC[CT]-3'), a frequently occurring elicitor-responsive cis-acting element. Also acts as a disease resistance protein involved in resistance to fungal and bacterial pathogens, including R.solanacearum, P.syringae pv. tomato and C.higginsianum. In presence of RPS4, elicites an EDS1-dependent hypersensitive response. This chain is Disease resistance protein RRS1, found in Arabidopsis thaliana (Mouse-ear cress).